Consider the following 158-residue polypeptide: Cytochrome c-type biogenesis protein CcmE (158 aa).

Over 1 to 23 (MNSQSFKNFPSLKFISKKRRKER) the chain is Cytoplasmic. A helical; Signal-anchor for type II membrane protein transmembrane segment spans residues 24–44 (LLMVLLCLFIMAITTGLIVYA). Topologically, residues 45-158 (MRNTANFFRT…DRLKKHHDIK (114 aa)) are periplasmic. His-138 and Tyr-142 together coordinate heme.

This sequence belongs to the CcmE/CycJ family.

It localises to the cell inner membrane. In terms of biological role, heme chaperone required for the biogenesis of c-type cytochromes. Transiently binds heme delivered by CcmC and transfers the heme to apo-cytochromes in a process facilitated by CcmF and CcmH. This chain is Cytochrome c-type biogenesis protein CcmE, found in Bartonella bacilliformis (strain ATCC 35685 / KC583 / Herrer 020/F12,63).